The following is a 326-amino-acid chain: tRNA-modifying protein YgfZ (326 aa).

Residues tryptophan 27 and tryptophan 189 each contribute to the folate site.

This sequence belongs to the tRNA-modifying YgfZ family.

It localises to the cytoplasm. In terms of biological role, folate-binding protein involved in regulating the level of ATP-DnaA and in the modification of some tRNAs. It is probably a key factor in regulatory networks that act via tRNA modification, such as initiation of chromosomal replication. The polypeptide is tRNA-modifying protein YgfZ (Escherichia coli O139:H28 (strain E24377A / ETEC)).